Here is a 608-residue protein sequence, read N- to C-terminus: NADH-quinone oxidoreductase subunit C/D (608 aa).

Residues 1 to 199 (MSAASSLAPQ…EPFHLSTEKE (199 aa)) are NADH dehydrogenase I subunit C. The interval 223 to 608 (DFMFLNLGPN…IDFVMADVDR (386 aa)) is NADH dehydrogenase I subunit D.

The protein in the N-terminal section; belongs to the complex I 30 kDa subunit family. In the C-terminal section; belongs to the complex I 49 kDa subunit family. As to quaternary structure, NDH-1 is composed of 13 different subunits. Subunits NuoB, CD, E, F, and G constitute the peripheral sector of the complex.

It is found in the cell inner membrane. The enzyme catalyses a quinone + NADH + 5 H(+)(in) = a quinol + NAD(+) + 4 H(+)(out). NDH-1 shuttles electrons from NADH, via FMN and iron-sulfur (Fe-S) centers, to quinones in the respiratory chain. The immediate electron acceptor for the enzyme in this species is believed to be ubiquinone. Couples the redox reaction to proton translocation (for every two electrons transferred, four hydrogen ions are translocated across the cytoplasmic membrane), and thus conserves the redox energy in a proton gradient. The chain is NADH-quinone oxidoreductase subunit C/D from Nitrosospira multiformis (strain ATCC 25196 / NCIMB 11849 / C 71).